A 371-amino-acid chain; its full sequence is Ferrochelatase (371 aa).

2 residues coordinate Fe cation: His218 and Glu299.

The protein belongs to the ferrochelatase family.

It is found in the cytoplasm. It catalyses the reaction heme b + 2 H(+) = protoporphyrin IX + Fe(2+). It participates in porphyrin-containing compound metabolism; protoheme biosynthesis; protoheme from protoporphyrin-IX: step 1/1. In terms of biological role, catalyzes the ferrous insertion into protoporphyrin IX. In Cupriavidus metallidurans (strain ATCC 43123 / DSM 2839 / NBRC 102507 / CH34) (Ralstonia metallidurans), this protein is Ferrochelatase.